The following is a 1686-amino-acid chain: A disintegrin and metalloproteinase with thrombospondin motifs 7 (1686 aa).

A signal peptide spans Met1–Gly27. Positions Ala28–Arg236 are excised as a propeptide. Asn94 carries an N-linked (GlcNAc...) asparagine glycan. The Cysteine switch motif lies at Ser202–Tyr209. Cys204 contributes to the Zn(2+) binding site. One can recognise a Peptidase M12B domain in the interval Lys242–Pro452. 11 cysteine pairs are disulfide-bonded: Cys318–Cys372, Cys347–Cys354, Cys366–Cys447, Cys405–Cys431, Cys474–Cys497, Cys485–Cys503, Cys492–Cys522, Cys516–Cys527, Cys550–Cys587, Cys554–Cys592, and Cys565–Cys577. His388 is a Zn(2+) binding site. Glu389 is a catalytic residue. Zn(2+) contacts are provided by His392 and His398. A Disintegrin domain is found at Val462–Val537. The 56-residue stretch at Asp538 to Pro593 folds into the TSP type-1 1 domain. 2 N-linked (GlcNAc...) asparagine glycosylation sites follow: Asn693 and Asn778. Positions His698–His809 are spacer. 3 consecutive TSP type-1 domains span residues Pro821 to Pro880, Ala881 to Val940, and Cys942 to Arg995. Disordered stretches follow at residues His1024–Asn1043, Pro1080–Val1257, and Leu1344–Pro1396. Polar residues predominate over residues Asp1182–Gln1205. Over residues Trp1210–Gly1226 the composition is skewed to basic and acidic residues. Residues Pro1360 to Ser1375 are compositionally biased toward low complexity. 4 consecutive TSP type-1 domains span residues Arg1411–His1459, Pro1462–Leu1522, Ser1523–Thr1567, and Pro1569–Glu1629. Residues Glu1632 to Ser1672 form the PLAC domain. The interval Arg1666 to Arg1686 is disordered.

Interacts with COMP. It depends on Zn(2+) as a cofactor. In terms of processing, N-glycosylated. Can be O-fucosylated by POFUT2 on a serine or a threonine residue found within the consensus sequence C1-X(2)-(S/T)-C2-G of the TSP type-1 repeat domains where C1 and C2 are the first and second cysteine residue of the repeat, respectively. Fucosylated repeats can then be further glycosylated by the addition of a beta-1,3-glucose residue by the glucosyltransferase, B3GALTL. Fucosylation mediates the efficient secretion of ADAMTS family members. Can also be C-glycosylated with one or two mannose molecules on tryptophan residues within the consensus sequence W-X-X-W of the TPRs. N- and C-glycosylations can also facilitate secretion. O-glycosylated proteoglycan; contains chondroitin sulfate. Post-translationally, may be cleaved by a furin endopeptidase. The precursor is sequentially processed. Expressed in heart, brain, placenta, lung, liver, skeletal muscle, kidney and pancreas. Detected in meniscus, bone, tendon, cartilage, synovium, fat and ligaments.

The protein resides in the secreted. It is found in the extracellular space. The protein localises to the extracellular matrix. In terms of biological role, metalloprotease. Was previously shown to degrade COMP. However, a later study found no activity against COMP. This is A disintegrin and metalloproteinase with thrombospondin motifs 7 (ADAMTS7) from Homo sapiens (Human).